We begin with the raw amino-acid sequence, 625 residues long: Probable potassium transport system protein Kup 2 (625 aa).

Transmembrane regions (helical) follow at residues 15-35 (LSFA…LYAF), 52-72 (ILSL…LVIV), 98-118 (GGWL…DGIL), 134-154 (LSPN…FFLF), 164-184 (IGIY…VLGF), 203-223 (IYFF…VFLV), 246-266 (WFAV…AFVL), 284-304 (FLPV…QAII), 336-356 (VYLP…VVIF), 365-385 (AYGI…GIIA), 394-414 (FKVM…AGNI), and 417-437 (LLTG…VMYT).

Belongs to the HAK/KUP transporter (TC 2.A.72) family.

It localises to the cell inner membrane. It carries out the reaction K(+)(in) + H(+)(in) = K(+)(out) + H(+)(out). Its function is as follows. Transport of potassium into the cell. Likely operates as a K(+):H(+) symporter. In Legionella pneumophila subsp. pneumophila (strain Philadelphia 1 / ATCC 33152 / DSM 7513), this protein is Probable potassium transport system protein Kup 2.